The primary structure comprises 76 residues: Protein MATERNALLY EXPRESSED GENE 4 (76 aa).

The first 27 residues, 1 to 27 (MEYRKRVDALVFFSLLLLGYFAAHAHG), serve as a signal peptide directing secretion. Cysteine 53 and cysteine 75 are disulfide-bonded.

This sequence belongs to the MEG family. As to expression, expressed exclusively in endosperm.

In Zea mays (Maize), this protein is Protein MATERNALLY EXPRESSED GENE 4 (MEG4).